We begin with the raw amino-acid sequence, 260 residues long: Thiazole synthase (260 aa).

The Schiff-base intermediate with DXP role is filled by K96. 1-deoxy-D-xylulose 5-phosphate is bound by residues G157, 184-185 (AG), and 206-207 (NT).

This sequence belongs to the ThiG family. As to quaternary structure, homotetramer. Forms heterodimers with either ThiH or ThiS.

It localises to the cytoplasm. The enzyme catalyses [ThiS sulfur-carrier protein]-C-terminal-Gly-aminoethanethioate + 2-iminoacetate + 1-deoxy-D-xylulose 5-phosphate = [ThiS sulfur-carrier protein]-C-terminal Gly-Gly + 2-[(2R,5Z)-2-carboxy-4-methylthiazol-5(2H)-ylidene]ethyl phosphate + 2 H2O + H(+). The protein operates within cofactor biosynthesis; thiamine diphosphate biosynthesis. In terms of biological role, catalyzes the rearrangement of 1-deoxy-D-xylulose 5-phosphate (DXP) to produce the thiazole phosphate moiety of thiamine. Sulfur is provided by the thiocarboxylate moiety of the carrier protein ThiS. In vitro, sulfur can be provided by H(2)S. The sequence is that of Thiazole synthase from Rhodopseudomonas palustris (strain ATCC BAA-98 / CGA009).